Reading from the N-terminus, the 191-residue chain is Putative glutathione-dependent formaldehyde-activating enzyme (191 aa).

Positions 20–166 (FAGGKLRCHC…FKALGLQTYD (147 aa)) constitute a CENP-V/GFA domain. Zn(2+) is bound by residues Cys-27, Cys-29, Cys-48, Cys-50, Cys-53, Cys-95, and Cys-98.

It belongs to the Gfa family. It depends on Zn(2+) as a cofactor.

The enzyme catalyses S-(hydroxymethyl)glutathione = glutathione + formaldehyde. Its pathway is one-carbon metabolism; formaldehyde degradation; formate from formaldehyde (glutathione route): step 1/3. Functionally, catalyzes the condensation of formaldehyde and glutathione to S-hydroxymethylglutathione. The sequence is that of Putative glutathione-dependent formaldehyde-activating enzyme from Penicillium rubens (strain ATCC 28089 / DSM 1075 / NRRL 1951 / Wisconsin 54-1255) (Penicillium chrysogenum).